We begin with the raw amino-acid sequence, 512 residues long: 2,3-bisphosphoglycerate-independent phosphoglycerate mutase (512 aa).

Positions 12 and 62 each coordinate Mn(2+). Ser-62 acts as the Phosphoserine intermediate in catalysis. Residues His-123, 153 to 154 (RD), Arg-185, Arg-191, 260 to 263 (RPDR), and Lys-333 each bind substrate. Residues Asp-400, His-404, Asp-441, His-442, and His-460 each contribute to the Mn(2+) site.

This sequence belongs to the BPG-independent phosphoglycerate mutase family. Monomer. The cofactor is Mn(2+).

The enzyme catalyses (2R)-2-phosphoglycerate = (2R)-3-phosphoglycerate. Its pathway is carbohydrate degradation; glycolysis; pyruvate from D-glyceraldehyde 3-phosphate: step 3/5. Its function is as follows. Catalyzes the interconversion of 2-phosphoglycerate and 3-phosphoglycerate. This chain is 2,3-bisphosphoglycerate-independent phosphoglycerate mutase, found in Clostridium beijerinckii (strain ATCC 51743 / NCIMB 8052) (Clostridium acetobutylicum).